Here is a 225-residue protein sequence, read N- to C-terminus: Transmembrane protein 225 (225 aa).

Over 1–8 (MVHVSNRS) the chain is Cytoplasmic. Residues 9 to 29 (IQGMNILFSSWAVVLMVMGIT) traverse the membrane as a helical segment. Topologically, residues 30–72 (LDKWVELISEDERAKMNHSPWMMCCPALWPEDDLKVVRIMMTS) are extracellular. The helical transmembrane segment at 73–93 (SLGLSFLLNLILGMKFTYLIP) threads the bilayer. Over 94-99 (QNKYIQ) the chain is Cytoplasmic. A helical membrane pass occupies residues 100-120 (LFTTILSFFSGISLLWALILY). The Extracellular portion of the chain corresponds to 121–136 (HNKLKQGQSMHFSSYR). A helical transmembrane segment spans residues 137–157 (ITWIMYTAYLNVFFLSVCGVL). Residues 158–225 (SLLECKLSTS…VQTRHVTWAL (68 aa)) are Cytoplasmic-facing. The RVxF motif lies at 219 to 223 (RHVTW).

As to quaternary structure, interacts (via RVxF motif) with PPP1CC.

The protein resides in the cytoplasmic vesicle. The protein localises to the secretory vesicle. It is found in the acrosome membrane. Its function is as follows. Probably inhibits protein phosphatase 1 (PP1) in sperm via binding to catalytic subunit PPP1CC. This chain is Transmembrane protein 225 (TMEM225), found in Homo sapiens (Human).